A 147-amino-acid chain; its full sequence is Hemoglobin subunit beta-2 (147 aa).

The 145-residue stretch at 3–147 (EWTDEERTII…VVSALGRQYH (145 aa)) folds into the Globin domain. Heme b is bound by residues H64 and H93.

The protein belongs to the globin family. In terms of assembly, hb 2 is a heterotetramer of two alpha-2 and two beta-2 chains. Hb 3 is a heterotetramer of two alpha-1 and two beta-2 chains. Red blood cells.

Functionally, involved in oxygen transport from gills to the various peripheral tissues. The sequence is that of Hemoglobin subunit beta-2 (hbb2) from Gadus morhua (Atlantic cod).